The chain runs to 243 residues: ATP synthase subunit a (243 aa).

8 helical membrane-spanning segments follow: residues 29–49 (NASL…YVGL), 54–74 (VIPN…VSTI), 89–109 (VFTI…PLGF), 114–134 (HIAV…FIGF), 141–161 (FLHI…MVLI), 177–197 (LAAN…FVIN), 200–220 (IFLT…EIFV), and 221–241 (AILQ…DAVN).

The protein belongs to the ATPase A chain family. F-type ATPases have 2 components, CF(1) - the catalytic core - and CF(0) - the membrane proton channel. CF(1) has five subunits: alpha(3), beta(3), gamma(1), delta(1), epsilon(1). CF(0) has three main subunits: a(1), b(2) and c(9-12). The alpha and beta chains form an alternating ring which encloses part of the gamma chain. CF(1) is attached to CF(0) by a central stalk formed by the gamma and epsilon chains, while a peripheral stalk is formed by the delta and b chains.

It localises to the cell inner membrane. Key component of the proton channel; it plays a direct role in the translocation of protons across the membrane. In Ehrlichia ruminantium (strain Welgevonden), this protein is ATP synthase subunit a.